Here is a 152-residue protein sequence, read N- to C-terminus: UPF0266 membrane protein YobD (152 aa).

3 consecutive transmembrane segments (helical) span residues 6–26 (LVLILFIAALLAYALYDQFIM), 45–65 (VDSVIFVGLVAILIYNNVTSH), and 67–87 (AQMTTWLLSALALMGFYIFWI).

This sequence belongs to the UPF0266 family.

The protein resides in the cell inner membrane. This chain is UPF0266 membrane protein YobD, found in Salmonella agona (strain SL483).